Reading from the N-terminus, the 4022-residue chain is Intermembrane lipid transfer protein VPS13B (4022 aa).

Residues 2–102 (LESYVTPILM…KDGIQDDHES (101 aa)) form the Chorein N-terminal domain. Residues 100–134 (HESCGSNSTNRSTAESTKSSIKPRRMQQAAPTDPD) are disordered. Over residues 103-119 (CGSNSTNRSTAESTKSS) the composition is skewed to polar residues. Residues Ser-414, Ser-999, Ser-1002, and Ser-1033 each carry the phosphoserine modification. Positions 1247 to 1314 (NLSPTSPETM…SVTLEQTTSN (68 aa)) are disordered. Polar residues-rich tracts occupy residues 1264-1292 (PVRS…TEGD) and 1302-1314 (FSDS…TTSN). Ser-1815 carries the phosphoserine modification. The span at 1860–1872 (KSQEQKNNEKTDK) shows a compositional bias: basic and acidic residues. Residues 1860–1880 (KSQEQKNNEKTDKSSLNLPEV) are disordered. Residues 2631–2716 (HFVICNDTQE…RTASLIIKVQ (86 aa)) form the SHR-BD domain. Residues 3908–4022 (AFPVTEIDCA…KNKALRKGFP (115 aa)) are localizes the protein to the Golgi apparatus.

The protein belongs to the VPS13 family. Interacts with STX6. Interacts with STX12. Interacts with RAB6A isoform 1 (GTP-bound) and isoform 2 (GTP-bound). Interacts with RAB6B (GTP-bound). In terms of tissue distribution, widely expressed. There is apparent differential expression of different transcripts. In fetal brain, lung, liver, and kidney, two transcripts of 2 and 5 kb are identified. These transcripts are also seen in all adult tissues analyzed. A larger transcript (12-14 kb) is expressed in prostate, testis, ovary, and colon in the adult. Expression is very low in adult brain tissue. Expressed in peripheral blood lymphocytes. Isoform 1 and isoform 2 are expressed in brain and retina. Isoform 2 is expressed ubiquitously.

The protein resides in the recycling endosome membrane. It is found in the cytoplasmic vesicle. It localises to the secretory vesicle. Its subcellular location is the acrosome membrane. The protein localises to the golgi apparatus. The protein resides in the cis-Golgi network membrane. It is found in the endoplasmic reticulum-Golgi intermediate compartment membrane. It localises to the trans-Golgi network membrane. Its subcellular location is the early endosome membrane. The protein localises to the lysosome membrane. In terms of biological role, mediates the transfer of lipids between membranes at organelle contact sites. Binds phosphatidylinositol 3-phosphate. Functions as a tethering factor in the slow endocytic recycling pathway, to assist traffic between early and recycling endosomes. Involved in the transport of proacrosomal vesicles to the nuclear dense lamina (NDL) during spermatid development. Plays a role in the assembly of the Golgi apparatus, possibly by mediating trafficking to the Golgi membrane. Plays a role in the development of the nervous system, and may be required for neuron projection development. May also play a role during adipose tissue development. Required for maintenance of the ocular lens. In Homo sapiens (Human), this protein is Intermembrane lipid transfer protein VPS13B (VPS13B).